A 943-amino-acid chain; its full sequence is Leucine--tRNA ligase (943 aa).

Positions 36–46 (PYPSGSMHVGH) match the 'HIGH' region motif. Residues 623–627 (KMSSS) carry the 'KMSKS' region motif. The segment at 910 to 943 (ASEVVIHTDPEEAPGPEDRKAGARPLRPGIWLEE) is disordered. Positions 915–930 (IHTDPEEAPGPEDRKA) are enriched in basic and acidic residues.

It belongs to the class-I aminoacyl-tRNA synthetase family.

The protein localises to the cytoplasm. The enzyme catalyses tRNA(Leu) + L-leucine + ATP = L-leucyl-tRNA(Leu) + AMP + diphosphate. In Methanopyrus kandleri (strain AV19 / DSM 6324 / JCM 9639 / NBRC 100938), this protein is Leucine--tRNA ligase.